The chain runs to 158 residues: Low molecular weight phosphotyrosine protein phosphatase (158 aa).

A2 is subject to N-acetylalanine. The Nucleophile role is filled by C13. R19 is an active-site residue. Residue D130 is the Proton donor of the active site. Phosphotyrosine is present on residues Y132 and Y133.

The protein belongs to the low molecular weight phosphotyrosine protein phosphatase family. In terms of assembly, interacts with EPHA2; dephosphorylates EPHA2. Interacts with EPHB1. Interacts with the SH3 domain of SPTAN1. Phosphorylated by LCK. Phosphorylation at Tyr-132 increases its phosphatase activity.

The protein localises to the cytoplasm. It carries out the reaction O-phospho-L-tyrosyl-[protein] + H2O = L-tyrosyl-[protein] + phosphate. It catalyses the reaction a phosphate monoester + H2O = an alcohol + phosphate. Its activity is regulated as follows. Inhibited by sulfhydryl reagents. Acts on tyrosine phosphorylated proteins, low-MW aryl phosphates and natural and synthetic acyl phosphates with differences in substrate specificity between isoform 1 and isoform 2. The chain is Low molecular weight phosphotyrosine protein phosphatase (ACP1) from Sus scrofa (Pig).